We begin with the raw amino-acid sequence, 219 residues long: Protein OPG170 (219 aa).

The first 16 residues, 1–16 (MYSLLFIILMCIPFSF), serve as a signal peptide directing secretion. An N-linked (GlcNAc...) asparagine; by host glycan is attached at asparagine 70.

It belongs to the orthopoxvirus OPG170 family.

It localises to the secreted. Its function is as follows. May interact with several cellular chemokines to interfere with chemokine-glycosaminoglycan (GAG) interactions at the cell surface to alter chemotaxis of nearby responsive cells. The chain is Protein OPG170 (OPG170) from Vaccinia virus (strain Copenhagen) (VACV).